Reading from the N-terminus, the 289-residue chain is 4-diphosphocytidyl-2-C-methyl-D-erythritol kinase (289 aa).

The active site involves lysine 10. 95–105 (PVSAGMGGGSA) lines the ATP pocket. Aspartate 137 is an active-site residue.

Belongs to the GHMP kinase family. IspE subfamily.

The catalysed reaction is 4-CDP-2-C-methyl-D-erythritol + ATP = 4-CDP-2-C-methyl-D-erythritol 2-phosphate + ADP + H(+). It participates in isoprenoid biosynthesis; isopentenyl diphosphate biosynthesis via DXP pathway; isopentenyl diphosphate from 1-deoxy-D-xylulose 5-phosphate: step 3/6. In terms of biological role, catalyzes the phosphorylation of the position 2 hydroxy group of 4-diphosphocytidyl-2C-methyl-D-erythritol. This is 4-diphosphocytidyl-2-C-methyl-D-erythritol kinase from Ligilactobacillus salivarius (strain UCC118) (Lactobacillus salivarius).